An 883-amino-acid polypeptide reads, in one-letter code: Translation initiation factor IF-2 (883 aa).

Disordered stretches follow at residues 52 to 102 (KGRD…VNVE) and 115 to 297 (VEAE…PTQP). Composition is skewed to basic and acidic residues over residues 115–179 (VEAE…REAT) and 204–237 (AAEK…ERAA). Positions 239–248 (KTGATAPAAK) are enriched in low complexity. Residues 265–275 (PGRRGGKKGGR) are compositionally biased toward basic residues. Over residues 276–285 (RAASGGEAAK) the composition is skewed to low complexity. The tr-type G domain maps to 383-550 (PRPPVVTVMG…AILLQAELME (168 aa)). The tract at residues 392 to 399 (GHVDHGKT) is G1. 392-399 (GHVDHGKT) is a GTP binding site. Positions 417-421 (GITQH) are G2. Residues 438-441 (DTPG) are G3. Residues 438-442 (DTPGH) and 492-495 (NKID) each bind GTP. Residues 492-495 (NKID) are G4. Residues 528–530 (SAK) form a G5 region.

It belongs to the TRAFAC class translation factor GTPase superfamily. Classic translation factor GTPase family. IF-2 subfamily.

The protein localises to the cytoplasm. Its function is as follows. One of the essential components for the initiation of protein synthesis. Protects formylmethionyl-tRNA from spontaneous hydrolysis and promotes its binding to the 30S ribosomal subunits. Also involved in the hydrolysis of GTP during the formation of the 70S ribosomal complex. The chain is Translation initiation factor IF-2 from Alkalilimnicola ehrlichii (strain ATCC BAA-1101 / DSM 17681 / MLHE-1).